A 301-amino-acid polypeptide reads, in one-letter code: Olfactory receptor 10AG1 (301 aa).

The Extracellular portion of the chain corresponds to 1–16; the sequence is MEFVLLGFSDIPNLHW. Residues 17–37 traverse the membrane as a helical segment; the sequence is MLFSIFLLMYLMILMCNGIII. Residues 38-45 are Cytoplasmic-facing; that stretch reads LLIKIHPA. Residues 46–66 traverse the membrane as a helical segment; it reads LQTPMYFFLSNFSLLEICYVT. The Extracellular segment spans residues 67-90; the sequence is IIIPRMLMDIWTQKGNISLFACAT. Asparagine 82 carries N-linked (GlcNAc...) asparagine glycosylation. Residues cysteine 88 and cysteine 180 are joined by a disulfide bond. Residues 91 to 111 traverse the membrane as a helical segment; that stretch reads QMCFFLMLGGTECLLLTVMAY. Residues 112 to 130 are Cytoplasmic-facing; the sequence is DRYVAICKPLQYPLVMNHK. Residues 131–151 form a helical membrane-spanning segment; sequence VCIQLIIASWTITIPVVIGET. At 152-188 the chain is on the extracellular side; that stretch reads CQIFLLPFCGTNTINHFFCDIPPILKLACGNIFVNEI. The helical transmembrane segment at 189–208 threads the bilayer; the sequence is TVHVVAVVFITVPFLLIVVS. The Cytoplasmic portion of the chain corresponds to 209 to 228; sequence YGKIISNILKLSSARGKAKA. A helical transmembrane segment spans residues 229–249; that stretch reads FSTCSSHLIVVILFFGAGTIT. The Extracellular portion of the chain corresponds to 250-262; it reads YLQPKPHQFQRMG. Residues 263-283 traverse the membrane as a helical segment; sequence KLISLFYTILIPTLNPIIYTL. The Cytoplasmic portion of the chain corresponds to 284 to 301; that stretch reads RNKDIMVALRKLLAKLLT.

It belongs to the G-protein coupled receptor 1 family.

It localises to the cell membrane. Its function is as follows. Odorant receptor. The chain is Olfactory receptor 10AG1 (OR10AG1) from Homo sapiens (Human).